A 1205-amino-acid polypeptide reads, in one-letter code: Nitric oxide synthase 3 (1205 aa).

The tract at residues 1 to 73 (MGNLKSVGQE…PPEGPKFPRV (73 aa)) is disordered. Residue Gly-2 is the site of N-myristoyl glycine attachment. 2 S-palmitoyl cysteine lipidation sites follow: Cys-15 and Cys-26. The segment covering 15–27 (CGLGLGLGLGLCG) has biased composition (gly residues). Residues 33-47 (SPAPEPSRAPAPATP) are compositionally biased toward pro residues. Positions 96 and 101 each coordinate Zn(2+). The segment at 100-488 (CCLGSLVLPR…PDPWKGSATK (389 aa)) is interaction with NOSIP. (6R)-L-erythro-5,6,7,8-tetrahydrobiopterin is bound at residue Ser-104. The residue at position 116 (Ser-116) is a Phosphoserine; by CDK5. Position 186 (Cys-186) interacts with heme b. The L-arginine site is built by Gln-249, Trp-358, Tyr-359, Glu-363, and Asn-368. The (6R)-L-erythro-5,6,7,8-tetrahydrobiopterin site is built by Ala-448, Trp-449, and Phe-462. Tyr-477 lines the heme b pocket. Residues 492 to 512 (ITRKKTFKEVANAVKISASLM) form a calmodulin-binding region. A Phosphothreonine; by AMPK and PKA modification is found at Thr-497. The Flavodoxin-like domain occupies 522-705 (ATILYASETG…AFRGWAKAAF (184 aa)). Positions 528, 529, 530, 532, 574, and 575 each coordinate FMN. A phosphoserine mark is found at Ser-617, Ser-635, and Ser-640. 4 residues coordinate FMN: Ser-656, Cys-663, Glu-689, and Gln-693. The FAD-binding FR-type domain maps to 758-1004 (RKMFQATVLS…IRGAPSFRLP (247 aa)). Position 778 (Arg-778) interacts with NADP(+). FAD is bound at residue His-800. The segment at 820-847 (EDPPPPTESVAVEQLEKGSPGGPPPSWV) is disordered. At Ser-838 the chain carries Phosphoserine. Residues Arg-940, Tyr-942, Ser-943, Thr-958, Ala-960, Tyr-964, Val-977, Cys-978, and Ser-979 each coordinate FAD. Residues Thr-1018, Arg-1051, Ser-1080, Arg-1081, Lys-1087, Tyr-1089, and Gln-1091 each coordinate NADP(+). Thr-1177 is subject to Phosphothreonine. A Phosphoserine; by AMPK, PDPK1 and PKA modification is found at Ser-1179. Residue Ser-1181 is modified to Phosphoserine.

It belongs to the NOS family. Homodimer. Interacts with NOSIP and NOSTRIN. Interacts with HSP90AB1. Forms a complex with ASL, ASS1 and SLC7A1; the complex regulates cell-autonomous L-arginine synthesis and citrulline recycling while channeling extracellular L-arginine to nitric oxide synthesis pathway. Heme b serves as cofactor. The cofactor is FAD. It depends on FMN as a cofactor. (6R)-L-erythro-5,6,7,8-tetrahydrobiopterin is required as a cofactor. Post-translationally, phosphorylation by AMPK at Ser-1179 in the presence of Ca(2+)-calmodulin (CaM) activates activity. In absence of Ca(2+)-calmodulin, AMPK also phosphorylates Thr-497, resulting in inhibition of activity. Phosphorylation of Ser-116 by CDK5 reduces activity.

The protein resides in the cell membrane. The protein localises to the membrane. Its subcellular location is the caveola. It is found in the cytoplasm. It localises to the cytoskeleton. The protein resides in the golgi apparatus. The catalysed reaction is 2 L-arginine + 3 NADPH + 4 O2 + H(+) = 2 L-citrulline + 2 nitric oxide + 3 NADP(+) + 4 H2O. Its activity is regulated as follows. Stimulated by calcium/calmodulin. Inhibited by NOSIP and NOSTRIN. Produces nitric oxide (NO) which is implicated in vascular smooth muscle relaxation through a cGMP-mediated signal transduction pathway. NO mediates vascular endothelial growth factor (VEGF)-induced angiogenesis in coronary vessels and promotes blood clotting through the activation of platelets. The polypeptide is Nitric oxide synthase 3 (NOS3) (Bos taurus (Bovine)).